The following is a 493-amino-acid chain: Protein nucleotidyltransferase YdiU (493 aa).

Gly-94, Gly-96, Arg-97, Lys-117, Asp-129, Gly-130, Arg-180, and Arg-187 together coordinate ATP. The active-site Proton acceptor is the Asp-256. Mg(2+)-binding residues include Asn-257 and Asp-266. Position 266 (Asp-266) interacts with ATP.

This sequence belongs to the SELO family. Requires Mg(2+) as cofactor. Mn(2+) is required as a cofactor.

The catalysed reaction is L-seryl-[protein] + ATP = 3-O-(5'-adenylyl)-L-seryl-[protein] + diphosphate. It catalyses the reaction L-threonyl-[protein] + ATP = 3-O-(5'-adenylyl)-L-threonyl-[protein] + diphosphate. It carries out the reaction L-tyrosyl-[protein] + ATP = O-(5'-adenylyl)-L-tyrosyl-[protein] + diphosphate. The enzyme catalyses L-histidyl-[protein] + UTP = N(tele)-(5'-uridylyl)-L-histidyl-[protein] + diphosphate. The catalysed reaction is L-seryl-[protein] + UTP = O-(5'-uridylyl)-L-seryl-[protein] + diphosphate. It catalyses the reaction L-tyrosyl-[protein] + UTP = O-(5'-uridylyl)-L-tyrosyl-[protein] + diphosphate. Its function is as follows. Nucleotidyltransferase involved in the post-translational modification of proteins. It can catalyze the addition of adenosine monophosphate (AMP) or uridine monophosphate (UMP) to a protein, resulting in modifications known as AMPylation and UMPylation. The sequence is that of Protein nucleotidyltransferase YdiU from Hahella chejuensis (strain KCTC 2396).